The chain runs to 162 residues: MLLTAEFWVAVAFVAFLVIVWRVGGFSMMTNGLDSRAKRVRNELDEARRLREEAAAVLADYKRRRTEAEREAEAIISGAREDAERIAAEGHARLNDFVARRTKSAEAKIAQAEAQASAQVRAAAADAAVKVSETLLRERLQGAAAQDLLRASLGDVKSRLQA.

Residues 1–21 (MLLTAEFWVAVAFVAFLVIVW) traverse the membrane as a helical segment.

The protein belongs to the ATPase B chain family. As to quaternary structure, F-type ATPases have 2 components, F(1) - the catalytic core - and F(0) - the membrane proton channel. F(1) has five subunits: alpha(3), beta(3), gamma(1), delta(1), epsilon(1). F(0) has three main subunits: a(1), b(2) and c(10-14). The alpha and beta chains form an alternating ring which encloses part of the gamma chain. F(1) is attached to F(0) by a central stalk formed by the gamma and epsilon chains, while a peripheral stalk is formed by the delta and b chains.

The protein localises to the cell inner membrane. F(1)F(0) ATP synthase produces ATP from ADP in the presence of a proton or sodium gradient. F-type ATPases consist of two structural domains, F(1) containing the extramembraneous catalytic core and F(0) containing the membrane proton channel, linked together by a central stalk and a peripheral stalk. During catalysis, ATP synthesis in the catalytic domain of F(1) is coupled via a rotary mechanism of the central stalk subunits to proton translocation. In terms of biological role, component of the F(0) channel, it forms part of the peripheral stalk, linking F(1) to F(0). The chain is ATP synthase subunit b 1 from Methylorubrum extorquens (strain PA1) (Methylobacterium extorquens).